The primary structure comprises 385 residues: UDP-4-amino-4-deoxy-L-arabinose--oxoglutarate aminotransferase (385 aa).

Catalysis depends on lysine 188, which acts as the Proton acceptor. Lysine 188 is modified (N6-(pyridoxal phosphate)lysine).

The protein belongs to the DegT/DnrJ/EryC1 family. ArnB subfamily. Homodimer. Requires pyridoxal 5'-phosphate as cofactor.

It catalyses the reaction UDP-4-amino-4-deoxy-beta-L-arabinose + 2-oxoglutarate = UDP-beta-L-threo-pentopyranos-4-ulose + L-glutamate. It functions in the pathway nucleotide-sugar biosynthesis; UDP-4-deoxy-4-formamido-beta-L-arabinose biosynthesis; UDP-4-deoxy-4-formamido-beta-L-arabinose from UDP-alpha-D-glucuronate: step 2/3. It participates in bacterial outer membrane biogenesis; lipopolysaccharide biosynthesis. Inhibited by L-cycloserine. Its function is as follows. Catalyzes the conversion of UDP-4-keto-arabinose (UDP-Ara4O) to UDP-4-amino-4-deoxy-L-arabinose (UDP-L-Ara4N). The modified arabinose is attached to lipid A and is required for resistance to polymyxin and cationic antimicrobial peptides. The protein is UDP-4-amino-4-deoxy-L-arabinose--oxoglutarate aminotransferase (arnB) of Salmonella typhimurium (strain LT2 / SGSC1412 / ATCC 700720).